The sequence spans 260 residues: MVRMSKEWPEEGDLIVGTVHKVLGYGAFAKLEEYEGKEAFIHISEVSSGWVKNIRDYVRENQKIVARVLRVNPKKGHVDASLKRIREDQRTRRMQQWKIEQKAEKLLEISAKSINKTLDEAYDEVGYLIMEEFGDLYEGFELASDDGENVLLDVDVSPEWAKIITEVAKKNISTPEVQITGYVDLTSYKSNGVEIIIEALQSIESDNVEVQCVGSPTYRIMVTTEDYPTAEKILSEAANKCIGIVEENDGEGSFHRELED.

The 72-residue stretch at G12–K83 folds into the S1 motif domain.

This sequence belongs to the eIF-2-alpha family. As to quaternary structure, heterotrimer composed of an alpha, a beta and a gamma chain.

EIF-2 functions in the early steps of protein synthesis by forming a ternary complex with GTP and initiator tRNA. This chain is Translation initiation factor 2 subunit alpha, found in Methanosphaera stadtmanae (strain ATCC 43021 / DSM 3091 / JCM 11832 / MCB-3).